Reading from the N-terminus, the 175-residue chain is Glutamyl-tRNA(Gln) amidotransferase subunit C, mitochondrial (175 aa).

This sequence belongs to the GatC family. As to quaternary structure, subunit of the heterotrimeric GatCAB amidotransferase (AdT) complex, composed of A, B and C subunits.

Its subcellular location is the mitochondrion. It carries out the reaction L-glutamyl-tRNA(Gln) + L-glutamine + ATP + H2O = L-glutaminyl-tRNA(Gln) + L-glutamate + ADP + phosphate + H(+). Functionally, allows the formation of correctly charged Gln-tRNA(Gln) through the transamidation of misacylated Glu-tRNA(Gln) in the mitochondria. The reaction takes place in the presence of glutamine and ATP through an activated gamma-phospho-Glu-tRNA(Gln). The polypeptide is Glutamyl-tRNA(Gln) amidotransferase subunit C, mitochondrial (Caenorhabditis elegans).